The following is a 428-amino-acid chain: Growth/differentiation factor 2 (428 aa).

Residues 1–22 (MSPGAFRVALLPLFLLVCVTQQ) form the signal peptide. Positions 23–318 (KPLQNWEQAS…VGPLLARRKR (296 aa)) are excised as a propeptide. N-linked (GlcNAc...) asparagine glycosylation is found at Asn70 and Asn135. A disulfide bridge links Cys155 with Cys236. A glycan (N-linked (GlcNAc...) asparagine) is linked at Asn262. Intrachain disulfides connect Cys326-Cys392, Cys355-Cys425, and Cys359-Cys427. Positions 401-415 (SILYKDDMGVPTLKY) are interaction with ENG.

This sequence belongs to the TGF-beta family. As to quaternary structure, homodimer; disulfide-linked. Detected in extracellular fluid as mature homodimer, and in complex with its propeptide. Interacts with ACVRL1, BMPR2 and ACVR2B with high affinity (in vitro). Identified in a complex with ACVRL1 and ACVR2B. Has ten times lower affinity for ACVR2A (in vitro). Interacts with ENG, forming a heterotetramer with a 2:2 stoichiometry. Can form a heteromeric complex with ENG and ACVRL1. Interacts with type I receptor ACVR1. In terms of processing, a reversible disulfide bond can be formed between the two subunits in the homodimer; this has no effect on GDF2 activity.

Its subcellular location is the secreted. Its function is as follows. Potent circulating inhibitor of angiogenesis. Signals through the type I activin receptor ACVRL1 but not other Alks. Signaling through SMAD1 in endothelial cells requires TGF-beta coreceptor endoglin/ENG. The protein is Growth/differentiation factor 2 (Gdf2) of Mus musculus (Mouse).